The primary structure comprises 391 residues: 3-ketoacyl-CoA thiolase (391 aa).

Cysteine 95 acts as the Acyl-thioester intermediate in catalysis. Catalysis depends on proton acceptor residues histidine 347 and cysteine 377.

This sequence belongs to the thiolase-like superfamily. Thiolase family. In terms of assembly, heterotetramer of two alpha chains (FadB) and two beta chains (FadA).

The protein localises to the cytoplasm. The enzyme catalyses an acyl-CoA + acetyl-CoA = a 3-oxoacyl-CoA + CoA. It functions in the pathway lipid metabolism; fatty acid beta-oxidation. In terms of biological role, catalyzes the final step of fatty acid oxidation in which acetyl-CoA is released and the CoA ester of a fatty acid two carbons shorter is formed. This chain is 3-ketoacyl-CoA thiolase, found in Pseudomonas aeruginosa (strain UCBPP-PA14).